A 439-amino-acid chain; its full sequence is O-methyltransferase aurJ (439 aa).

Residue Asp283 participates in S-adenosyl-L-methionine binding. Residue His338 is the Proton acceptor of the active site.

This sequence belongs to the class I-like SAM-binding methyltransferase superfamily. Cation-independent O-methyltransferase family. COMT subfamily.

The enzyme catalyses norrubrofusarin + S-adenosyl-L-methionine = rubrofusarin + S-adenosyl-L-homocysteine + H(+). Its pathway is pigment biosynthesis. O-methyltransferase; part of the gene cluster that mediates the biosynthesis of aurofusarin, a red mycelium pigment which is acting as a mycotoxin. The first step is performed by the polyketide synthase which condenses one acetyl-CoA and 6 malonyl-CoA units to form the first intermediate, the cyclic heptaketide and yellow pigment YWA1. The C2 hydroxyl group in the pyrone ring of YWA1 is probably formed during ring closure by an aldol-type cyclization reaction. The dehydratase aurZ then acts as the first tailoring enzyme in the aurofusarin biosynthetic pathway by converting YWA1 to nor-rubrofusarin. Nor-rubrofusarin is then methylated to rubrofusarin by the O-methyltransferase aurJ. Rubrofusarin is then transported across the plasma membrane by the rubrofusarin-specific pump aurT for further enzymatic processing by the extracellular complex composed of GIP1, aurF, aurO and aurS to yield aurofusarin. The chain is O-methyltransferase aurJ from Gibberella zeae (strain ATCC MYA-4620 / CBS 123657 / FGSC 9075 / NRRL 31084 / PH-1) (Wheat head blight fungus).